The following is a 381-amino-acid chain: Galactose-1-phosphate uridylyltransferase (381 aa).

Residues Cys65 and Cys68 each coordinate Zn(2+). UDP-alpha-D-glucose is bound at residue 90–91; that stretch reads ND. His131 lines the Zn(2+) pocket. A UDP-alpha-D-glucose-binding site is contributed by Asn175. His186 lines the Zn(2+) pocket. Residue His188 is the Tele-UMP-histidine intermediate of the active site. Position 190 (Gln190) interacts with UDP-alpha-D-glucose. Residues Glu204, His306, His323, and His325 each contribute to the Fe cation site. Residues 338–341 and 343–344 contribute to the UDP-alpha-D-glucose site; these read KFMV and FE.

It belongs to the galactose-1-phosphate uridylyltransferase type 1 family. In terms of assembly, homodimer. Requires Zn(2+) as cofactor.

It catalyses the reaction alpha-D-galactose 1-phosphate + UDP-alpha-D-glucose = alpha-D-glucose 1-phosphate + UDP-alpha-D-galactose. The protein operates within carbohydrate metabolism; galactose metabolism. The chain is Galactose-1-phosphate uridylyltransferase (GAL7) from Cryptococcus neoformans var. neoformans serotype D (strain B-3501A) (Filobasidiella neoformans).